The sequence spans 270 residues: Formamidopyrimidine-DNA glycosylase (270 aa).

The active-site Schiff-base intermediate with DNA is the P2. The active-site Proton donor is the E3. K58 functions as the Proton donor; for beta-elimination activity in the catalytic mechanism. H91, R109, and R151 together coordinate DNA. Residues 236-270 (LVYGRGGEACKTCQKPLKEIRMNDRTTVYCVTCQQ) form an FPG-type zinc finger. The active-site Proton donor; for delta-elimination activity is the R260.

It belongs to the FPG family. In terms of assembly, monomer. The cofactor is Zn(2+).

It catalyses the reaction Hydrolysis of DNA containing ring-opened 7-methylguanine residues, releasing 2,6-diamino-4-hydroxy-5-(N-methyl)formamidopyrimidine.. It carries out the reaction 2'-deoxyribonucleotide-(2'-deoxyribose 5'-phosphate)-2'-deoxyribonucleotide-DNA = a 3'-end 2'-deoxyribonucleotide-(2,3-dehydro-2,3-deoxyribose 5'-phosphate)-DNA + a 5'-end 5'-phospho-2'-deoxyribonucleoside-DNA + H(+). Involved in base excision repair of DNA damaged by oxidation or by mutagenic agents. Acts as a DNA glycosylase that recognizes and removes damaged bases. Has a preference for oxidized purines, such as 7,8-dihydro-8-oxoguanine (8-oxoG). Has AP (apurinic/apyrimidinic) lyase activity and introduces nicks in the DNA strand. Cleaves the DNA backbone by beta-delta elimination to generate a single-strand break at the site of the removed base with both 3'- and 5'-phosphates. This chain is Formamidopyrimidine-DNA glycosylase, found in Cellvibrio japonicus (strain Ueda107) (Pseudomonas fluorescens subsp. cellulosa).